Reading from the N-terminus, the 519-residue chain is Light-independent protochlorophyllide reductase subunit B (519 aa).

Residue D36 participates in [4Fe-4S] cluster binding. D274 serves as the catalytic Proton donor. A substrate-binding site is contributed by 409–410 (GL). The interval 426–465 (DEAGPSHHGGHSPKPSEAARTPDKVEERADPAPEAPQTGS) is disordered. Basic and acidic residues predominate over residues 445–456 (RTPDKVEERADP).

It belongs to the ChlB/BchB/BchZ family. In terms of assembly, protochlorophyllide reductase is composed of three subunits; BchL, BchN and BchB. Forms a heterotetramer of two BchB and two BchN subunits. The cofactor is [4Fe-4S] cluster.

The catalysed reaction is chlorophyllide a + oxidized 2[4Fe-4S]-[ferredoxin] + 2 ADP + 2 phosphate = protochlorophyllide a + reduced 2[4Fe-4S]-[ferredoxin] + 2 ATP + 2 H2O. Its pathway is porphyrin-containing compound metabolism; bacteriochlorophyll biosynthesis (light-independent). Its function is as follows. Component of the dark-operative protochlorophyllide reductase (DPOR) that uses Mg-ATP and reduced ferredoxin to reduce ring D of protochlorophyllide (Pchlide) to form chlorophyllide a (Chlide). This reaction is light-independent. The NB-protein (BchN-BchB) is the catalytic component of the complex. The polypeptide is Light-independent protochlorophyllide reductase subunit B (Jannaschia sp. (strain CCS1)).